We begin with the raw amino-acid sequence, 600 residues long: DNA polymerase alpha subunit B (600 aa).

Residues 112–167 (AYTTPSKGPHKRVSSTPETPLTKRSISTRSPHQLLSPSSFSPSATPSQKYSSRTNR) are disordered. Residues 125 to 140 (SSTPETPLTKRSISTR) are compositionally biased toward polar residues. Position 126 is a phosphoserine (S126). T127 and T130 each carry phosphothreonine. Phosphoserine occurs at positions 141, 147, 152, and 154. Over residues 141–158 (SPHQLLSPSSFSPSATPS) the composition is skewed to low complexity.

The protein belongs to the DNA polymerase alpha subunit B family. Component of the alpha DNA polymerase complex (also known as the alpha DNA polymerase-primase complex) consisting of four subunits: the catalytic subunit POLA1, the regulatory subunit POLA2, and the primase complex subunits PRIM1 and PRIM2 respectively. Within the complex, POLA1 directly interacts with PRIM2. Post-translationally, phosphorylated in a cell cycle-dependent manner, in G2/M phase.

The protein resides in the nucleus. Functionally, accessory subunit of the DNA polymerase alpha complex (also known as the alpha DNA polymerase-primase complex) which plays an essential role in the initiation of DNA synthesis. During the S phase of the cell cycle, the DNA polymerase alpha complex (composed of a catalytic subunit POLA1, an accessory subunit POLA2 and two primase subunits, the catalytic subunit PRIM1 and the regulatory subunit PRIM2) is recruited to DNA at the replicative forks via direct interactions with MCM10 and WDHD1. The primase subunit of the polymerase alpha complex initiates DNA synthesis by oligomerising short RNA primers on both leading and lagging strands. These primers are initially extended by the polymerase alpha catalytic subunit and subsequently transferred to polymerase delta and polymerase epsilon for processive synthesis on the lagging and leading strand, respectively. The sequence is that of DNA polymerase alpha subunit B (Pola2) from Rattus norvegicus (Rat).